The following is a 945-amino-acid chain: Isoleucine--tRNA ligase (945 aa).

Residues 66–76 (PYANGDIHLGH) carry the 'HIGH' region motif. Glutamate 581 is a binding site for L-isoleucyl-5'-AMP. A 'KMSKS' region motif is present at residues 622 to 626 (KMSKS). Position 625 (lysine 625) interacts with ATP. Zn(2+) is bound by residues cysteine 908, cysteine 911, cysteine 928, and cysteine 931.

This sequence belongs to the class-I aminoacyl-tRNA synthetase family. IleS type 1 subfamily. Monomer. Requires Zn(2+) as cofactor.

It is found in the cytoplasm. The enzyme catalyses tRNA(Ile) + L-isoleucine + ATP = L-isoleucyl-tRNA(Ile) + AMP + diphosphate. Its function is as follows. Catalyzes the attachment of isoleucine to tRNA(Ile). As IleRS can inadvertently accommodate and process structurally similar amino acids such as valine, to avoid such errors it has two additional distinct tRNA(Ile)-dependent editing activities. One activity is designated as 'pretransfer' editing and involves the hydrolysis of activated Val-AMP. The other activity is designated 'posttransfer' editing and involves deacylation of mischarged Val-tRNA(Ile). This Burkholderia lata (strain ATCC 17760 / DSM 23089 / LMG 22485 / NCIMB 9086 / R18194 / 383) protein is Isoleucine--tRNA ligase.